The following is a 322-amino-acid chain: Extracellular metalloprotease AFUA_1G07730 (322 aa).

A signal peptide spans 1–22 (MLPFNSCVYVLLIISLMSNCRA). Residues Asn-123 and Asn-197 are each glycosylated (N-linked (GlcNAc...) asparagine). His-233 lines the Zn(2+) pocket. Glu-234 is a catalytic residue. A Zn(2+)-binding site is contributed by His-237. The cysteines at positions 272 and 299 are disulfide-linked.

It belongs to the peptidase M43B family.

It localises to the secreted. Secreted metalloproteinase that allows assimilation of proteinaceous substrates. Plays a pivotal role as a pathogenicity determinant during infections and contributes to the ability of the pathogen to persist within the mammalian host. This chain is Extracellular metalloprotease AFUA_1G07730, found in Aspergillus fumigatus (strain ATCC MYA-4609 / CBS 101355 / FGSC A1100 / Af293) (Neosartorya fumigata).